A 583-amino-acid polypeptide reads, in one-letter code: Long-chain-fatty-acid--AMP ligase FadD26 (583 aa).

The protein belongs to the ATP-dependent AMP-binding enzyme family.

It carries out the reaction holo-[(phenol)carboxyphthiodiolenone synthase] + a long-chain fatty acid + ATP = a long-chain fatty acyl-[(phenol)carboxyphthiodiolenone synthase] + AMP + diphosphate. The enzyme catalyses eicosanoate + holo-[(phenol)carboxyphthiodiolenone synthase] + ATP = icosanoyl-[(phenol)carboxyphthiodiolenone synthase] + AMP + diphosphate. It catalyses the reaction holo-[(phenol)carboxyphthiodiolenone synthase] + docosanoate + ATP = docosanoyl-[(phenol)carboxyphthiodiolenone synthase] + AMP + diphosphate. Its pathway is lipid metabolism; fatty acid biosynthesis. Catalyzes the activation of long-chain fatty acids as acyl-adenylates (acyl-AMP), which are then transferred to the multifunctional polyketide synthase PpsA for further chain extension. Catalyzes the adenylation of the long-chain fatty acids eicosanoate (C20) or docosanoate (C22), and potentially the very-long-chain fatty acid lignocerate (C24). Involved in the biosynthesis of phthiocerol dimycocerosate (DIM A) and phthiodiolone dimycocerosate (DIM B). The polypeptide is Long-chain-fatty-acid--AMP ligase FadD26 (fadD26) (Mycobacterium tuberculosis (strain CDC 1551 / Oshkosh)).